A 64-amino-acid polypeptide reads, in one-letter code: Small ribosomal subunit protein eS17 (64 aa).

It belongs to the eukaryotic ribosomal protein eS17 family.

The protein is Small ribosomal subunit protein eS17 of Methanosarcina acetivorans (strain ATCC 35395 / DSM 2834 / JCM 12185 / C2A).